We begin with the raw amino-acid sequence, 281 residues long: Polyamine aminopropyltransferase (281 aa).

The PABS domain maps to 2–237 (EIWYTEKLEL…GIIGFTFLSN (236 aa)). Q33 contacts S-methyl-5'-thioadenosine. Residues H64 and D88 each contribute to the spermidine site. Residues E108 and 139-140 (DG) each bind S-methyl-5'-thioadenosine. The active-site Proton acceptor is D157. A spermidine-binding site is contributed by 157 to 160 (DSSD). Residue P164 coordinates S-methyl-5'-thioadenosine.

This sequence belongs to the spermidine/spermine synthase family. As to quaternary structure, homodimer or homotetramer.

The protein resides in the cytoplasm. It catalyses the reaction S-adenosyl 3-(methylsulfanyl)propylamine + putrescine = S-methyl-5'-thioadenosine + spermidine + H(+). It functions in the pathway amine and polyamine biosynthesis; spermidine biosynthesis; spermidine from putrescine: step 1/1. In terms of biological role, catalyzes the irreversible transfer of a propylamine group from the amino donor S-adenosylmethioninamine (decarboxy-AdoMet) to putrescine (1,4-diaminobutane) to yield spermidine. The chain is Polyamine aminopropyltransferase from Leptospira biflexa serovar Patoc (strain Patoc 1 / Ames).